The sequence spans 708 residues: Lactotransferrin (708 aa).

Positions 1–19 (MKLFVPALLSLGALGLCLA) are cleaved as a signal peptide. 2 consecutive Transferrin-like domains span residues 25 to 352 (VRWC…NLRE) and 364 to 693 (VVWC…NLKK). Cystine bridges form between Cys-28-Cys-64 and Cys-38-Cys-55. Position 79 (Asp-79) interacts with Fe(3+). Lys-92 is a catalytic residue. Tyr-111 lines the Fe(3+) pocket. 5 disulfide bridges follow: Cys-134/Cys-217, Cys-176/Cys-192, Cys-179/Cys-202, Cys-189/Cys-200, and Cys-250/Cys-264. Residues Arg-140, Ala-142, and Gly-143 each contribute to the hydrogencarbonate site. Tyr-211 contributes to the Fe(3+) binding site. Residue Asn-252 is glycosylated (N-linked (GlcNAc...) (high mannose) asparagine). Position 272 (His-272) interacts with Fe(3+). The Nucleophile role is filled by Ser-278. N-linked (GlcNAc...) asparagine glycosylation is present at Asn-300. 2 disulfide bridges follow: Cys-367–Cys-399 and Cys-377–Cys-390. N-linked (GlcNAc...) (complex) asparagine; alternate glycosylation occurs at Asn-387. An N-linked (GlcNAc...) (high mannose) asparagine; alternate glycan is attached at Asn-387. N-linked (GlcNAc...) (hybrid) asparagine; alternate glycosylation is present at Asn-387. Residues Asp-414 and Tyr-452 each coordinate Fe(3+). 8 disulfide bridges follow: Cys-424–Cys-703, Cys-444–Cys-666, Cys-476–Cys-551, Cys-500–Cys-694, Cys-510–Cys-524, Cys-521–Cys-534, Cys-592–Cys-606, and Cys-644–Cys-649. 4 residues coordinate hydrogencarbonate: Thr-478, Arg-482, Ala-484, and Gly-485. N-linked (GlcNAc...) (complex) asparagine; alternate glycosylation occurs at Asn-495. Asn-495 carries N-linked (GlcNAc...) (high mannose) asparagine; alternate glycosylation. An N-linked (GlcNAc...) (hybrid) asparagine; alternate glycan is attached at Asn-495. Position 545 (Tyr-545) interacts with Fe(3+). Asn-564 is a glycosylation site (N-linked (GlcNAc...) (high mannose) asparagine). His-614 provides a ligand contact to Fe(3+).

It belongs to the transferrin family. In terms of assembly, monomer. Found in a complex with LTF, CLU, EPPIN and SEMG1. Found in a complex with MPO and LTF; interacts directly with CP, allows Fe(3+) incorporation into LTF and activation of CP ferroxidase activity. In terms of processing, poly-N-acetyllactosaminic carbohydrate moiety seems to be needed for TLR4 activation.

Its subcellular location is the secreted. The protein localises to the cytoplasmic granule. Its function is as follows. Transferrins are iron binding transport proteins which can bind two Fe(3+) ions in association with the binding of an anion, usually bicarbonate. In terms of biological role, major iron-binding and multifunctional protein found in exocrine fluids such as breast milk and mucosal secretions. Has antimicrobial activity, which depends on the extracellular cation concentration. Antimicrobial properties include bacteriostasis, which is related to its ability to sequester free iron and thus inhibit microbial growth, as well as direct bactericidal properties leading to the release of lipopolysaccharides from the bacterial outer membrane. Can also prevent bacterial biofilm development in P.aeruginosa infection. Has weak antifungal activity against C.albicans. Has anabolic, differentiating and anti-apoptotic effects on osteoblasts and can also inhibit osteoclastogenesis, possibly playing a role in the regulation of bone growth. Promotes binding of species C adenoviruses to epithelial cells, promoting adenovirus infection. Can inhibit papillomavirus infections. Stimulates the TLR4 signaling pathway leading to NF-kappa-B activation and subsequent pro-inflammatory cytokine production while also interfering with the lipopolysaccharide (LPS)-stimulated TLR4 signaling. Inhibits neutrophil granulocyte migration to sites of apoptosis, when secreted by apoptotic cells. Stimulates VEGFA-mediated endothelial cell migration and proliferation. Binds heparin, chondroitin sulfate and possibly other glycosaminoglycans (GAGs). Also binds specifically to pneumococcal surface protein A (PspA), the lipid A portion of bacterial lipopolysaccharide (LPS), lysozyme and DNA. Lactoferricin binds to the bacterial surface and is crucial for the bactericidal functions. Has some antiviral activity against papillomavirus infection. N-terminal region shows strong antifungal activity against C.albicans. Contains two BBXB heparin-binding consensus sequences that appear to form the predominate functional GAG-binding site. Functionally, the lactotransferrin transferrin-like domain 1 functions as a serine protease of the peptidase S60 family that cuts arginine rich regions. This function contributes to the antimicrobial activity. Shows a preferential cleavage at -Arg-Ser-Arg-Arg-|- and -Arg-Arg-Ser-Arg-|-, and of Z-Phe-Arg-|-aminomethylcoumarin sites. The sequence is that of Lactotransferrin (LTF) from Capra hircus (Goat).